The chain runs to 512 residues: ATP synthase subunit alpha (512 aa).

169 to 176 (GDRQTGKT) is a binding site for ATP.

Belongs to the ATPase alpha/beta chains family. As to quaternary structure, F-type ATPases have 2 components, CF(1) - the catalytic core - and CF(0) - the membrane proton channel. CF(1) has five subunits: alpha(3), beta(3), gamma(1), delta(1), epsilon(1). CF(0) has three main subunits: a(1), b(2) and c(9-12). The alpha and beta chains form an alternating ring which encloses part of the gamma chain. CF(1) is attached to CF(0) by a central stalk formed by the gamma and epsilon chains, while a peripheral stalk is formed by the delta and b chains.

The protein resides in the cell inner membrane. The catalysed reaction is ATP + H2O + 4 H(+)(in) = ADP + phosphate + 5 H(+)(out). Produces ATP from ADP in the presence of a proton gradient across the membrane. The alpha chain is a regulatory subunit. The sequence is that of ATP synthase subunit alpha from Azoarcus sp. (strain BH72).